Here is a 101-residue protein sequence, read N- to C-terminus: Citrate lyase acyl carrier protein (101 aa).

Residue S14 is modified to O-(phosphoribosyl dephospho-coenzyme A)serine.

Belongs to the CitD family. As to quaternary structure, oligomer with a subunit composition of (alpha,beta,gamma)6.

The protein resides in the cytoplasm. Functionally, covalent carrier of the coenzyme of citrate lyase. The sequence is that of Citrate lyase acyl carrier protein from Clostridium perfringens (strain 13 / Type A).